Consider the following 463-residue polypeptide: Exodeoxyribonuclease 7 large subunit (463 aa).

This sequence belongs to the XseA family. Heterooligomer composed of large and small subunits.

It is found in the cytoplasm. It carries out the reaction Exonucleolytic cleavage in either 5'- to 3'- or 3'- to 5'-direction to yield nucleoside 5'-phosphates.. Bidirectionally degrades single-stranded DNA into large acid-insoluble oligonucleotides, which are then degraded further into small acid-soluble oligonucleotides. This chain is Exodeoxyribonuclease 7 large subunit, found in Bordetella bronchiseptica (strain ATCC BAA-588 / NCTC 13252 / RB50) (Alcaligenes bronchisepticus).